A 438-amino-acid polypeptide reads, in one-letter code: LIM domain-containing protein C4F6.12 (438 aa).

Disordered stretches follow at residues 1–37 (MHSPIPELPRFERRLTGPRAAPSSPVSTNGSPLNNLV) and 49–78 (TGGRIATPLPQPSLKTPESPLSKRNPTIKQ). Positions 24–37 (SPVSTNGSPLNNLV) are enriched in polar residues. S67 and S96 each carry phosphoserine. LIM zinc-binding domains lie at 256-316 (KSCH…QFSP), 318-375 (CKHC…NKYA), and 376-435 (VKCK…SVKF).

The chain is LIM domain-containing protein C4F6.12 from Schizosaccharomyces pombe (strain 972 / ATCC 24843) (Fission yeast).